A 265-amino-acid chain; its full sequence is MTLRLSAIELRHSDGTLALRGLDLSIARGERVAIIGPSGAGKTTLLNLLASALPPSAGQLQVLGTDPWQLSSKRRQRLRSRIALIHQAPPLPARQRVVTAVSAGRLGQWGLGKSLLNLLHPLDISGAREVLARLDLADKLFERCQQLSGGQLQRVGIARALYQQPELLLADEPVSAMDPRLADHTLALLGQHAIEHNVTLVASLHAVELALAHFPRIIGVRDGRIHFDLAASEVGREHLDTLYANEQLSPQPVSDAAETRWTPRC.

One can recognise an ABC transporter domain in the interval 3–247 (LRLSAIELRH…HLDTLYANEQ (245 aa)). 36–43 (GPSGAGKT) serves as a coordination point for ATP.

It belongs to the ABC transporter superfamily. Phosphonates importer (TC 3.A.1.9.1) family. As to quaternary structure, the complex is composed of two ATP-binding proteins (PhnC), two transmembrane proteins (PhnE) and a solute-binding protein (PhnD).

Its subcellular location is the cell inner membrane. The catalysed reaction is phosphonate(out) + ATP + H2O = phosphonate(in) + ADP + phosphate + H(+). Part of the ABC transporter complex PhnCDE involved in phosphonates import. Responsible for energy coupling to the transport system. This chain is Phosphonates import ATP-binding protein PhnC 1, found in Pseudomonas syringae pv. syringae (strain B728a).